The sequence spans 1050 residues: Toll-like receptor 7 (1050 aa).

Positions 1 to 26 (MVFSMWTRKRQILIFLNMLLVSRVFG) are cleaved as a signal peptide. The Extracellular segment spans residues 27-837 (FRWFPKTLPC…SLDLYTCELD (811 aa)). LRR repeat units lie at residues 42–64 (IPEA…EGIP), 65–87 (TNTT…SFRR), 89–111 (NHLE…KANV), 126–149 (LSDL…LPSS), 151–170 (HLLS…NLTE), 171–195 (LVNI…SYSI), 203–226 (MRNL…LPPN), 228–247 (LELY…DFNN), 248–273 (LNEL…CTPC), 275–289 (NNSP…FNSL), 290–312 (TELK…WFKN), 314–337 (RNLQ…KFLH), 339–364 (LPNL…TLPH), 369–392 (LENL…SLSV), 396–419 (LPRL…IFKH), 421–443 (ENLK…REVG), 493–516 (HIYG…DFQH), 517–542 (LSFL…LWPL), 543–565 (RELR…AFEE), and 567–589 (QSLE…ITHM). 2 N-linked (GlcNAc...) asparagine glycosylation sites follow: asparagine 66 and asparagine 69. Residues asparagine 167, asparagine 190, and asparagine 215 are each glycosylated (N-linked (GlcNAc...) asparagine). N-linked (GlcNAc...) asparagine glycosylation is present at asparagine 387. Residues asparagine 524 and asparagine 535 are each glycosylated (N-linked (GlcNAc...) asparagine). N-linked (GlcNAc...) asparagine glycosylation occurs at asparagine 591. LRR repeat units follow at residues 596–619 (LRLL…TMES), 620–645 (DSLR…RYLD), 650–673 (LFNL…VFEG), 675–698 (PPNL…RLQL), 699–722 (LKHL…LANC), 724–746 (KSLT…FLED), 747–770 (ALQL…SFPE), and 773–796 (LNNL…VWFV). N-linked (GlcNAc...) asparagine glycans are attached at residues asparagine 680 and asparagine 721. N-linked (GlcNAc...) asparagine glycosylation occurs at asparagine 800. The chain crosses the membrane as a helical span at residues 838 to 858 (LTNLILFSVSISSVLFLMVVM). At 859–1050 (TTSHLFFWDM…AYSQMFKETV (192 aa)) the chain is on the cytoplasmic side. The TIR domain occupies 890–1034 (SCYDAFIVYD…YFWQCLKNAL (145 aa)).

This sequence belongs to the Toll-like receptor family. As to quaternary structure, homodimer. Interacts with MYD88 via their respective TIR domains. Interacts with UNC93B1. Interacts with SMPDL3B. The first cleavage is performed by asparagine endopeptidase or cathepsin family members. This initial cleavage event is followed by a trimming event that is solely cathepsin mediated and required for optimal receptor signaling.

It is found in the endosome membrane. The protein localises to the endoplasmic reticulum membrane. It localises to the lysosome. Its subcellular location is the cytoplasmic vesicle. The protein resides in the phagosome. With respect to regulation, activated by guanosine analogs including deoxyguanosine, 7-thia-8-oxoguanosine or 7-deazaguanosine in a RNA-independent manner. Endosomal receptor that plays a key role in innate and adaptive immunity. Controls host immune response against pathogens through recognition of uridine-containing single strand RNAs (ssRNAs) of viral origin or guanosine analogs. Upon binding to agonists, undergoes dimerization that brings TIR domains from the two molecules into direct contact, leading to the recruitment of TIR-containing downstream adapter MYD88 through homotypic interaction. In turn, the Myddosome signaling complex is formed involving IRAK4, IRAK1, TRAF6, TRAF3 leading to activation of downstream transcription factors NF-kappa-B and IRF7 to induce pro-inflammatory cytokines and interferons, respectively. In plasmacytoid dendritic cells, RNASET2 endonuclease cooperates with PLD3 or PLD4 5'-&gt;3' exonucleases to process RNA and release 2',3'-cyclic guanosine monophosphate (2',3'-cGMP) and cytidine-rich RNA fragments that occupy TLR7 ligand-binding pockets and trigger a signaling-competent state. The chain is Toll-like receptor 7 (Tlr7) from Mus musculus (Mouse).